Consider the following 89-residue polypeptide: Small ribosomal subunit protein uS15 (89 aa).

Belongs to the universal ribosomal protein uS15 family. As to quaternary structure, part of the 30S ribosomal subunit. Forms a bridge to the 50S subunit in the 70S ribosome, contacting the 23S rRNA.

In terms of biological role, one of the primary rRNA binding proteins, it binds directly to 16S rRNA where it helps nucleate assembly of the platform of the 30S subunit by binding and bridging several RNA helices of the 16S rRNA. Forms an intersubunit bridge (bridge B4) with the 23S rRNA of the 50S subunit in the ribosome. The protein is Small ribosomal subunit protein uS15 of Mycobacterium sp. (strain JLS).